We begin with the raw amino-acid sequence, 880 residues long: Chaperone protein ClpB 1 (880 aa).

The 143-residue stretch at 6–148 (PNKFTDKAWE…EASIKAVRGS (143 aa)) folds into the Clp R domain. 2 repeat regions span residues 9–74 (FTDK…TQRQ) and 85–148 (LGRS…VRGS). The tract at residues 161 to 343 (EALQKFGRDL…RRFQQVYVDQ (183 aa)) is NBD1. 208–215 (GEPGVGKT) is an ATP binding site. Positions 344–554 (PSVENTISIL…IAEIVAKWTG (211 aa)) are linker. Residues 394 to 530 (IDLVDEAAAQ…KEAKLLELQS (137 aa)) are a coiled coil. Residues 564 to 775 (ERQKLLQLES…RVDDTILFHA (212 aa)) form an NBD2 region. 614-621 (GPTGVGKT) lines the ATP pocket. A C-terminal region spans residues 776 to 880 (LSRSEMSHII…VKVSVTQITT (105 aa)).

Belongs to the ClpA/ClpB family. As to quaternary structure, homohexamer. The oligomerization is ATP-dependent.

The protein localises to the cytoplasm. Functionally, part of a stress-induced multi-chaperone system, it is involved in the recovery of the cell from heat-induced damage, in cooperation with DnaK, DnaJ and GrpE. Acts before DnaK, in the processing of protein aggregates. Protein binding stimulates the ATPase activity; ATP hydrolysis unfolds the denatured protein aggregates, which probably helps expose new hydrophobic binding sites on the surface of ClpB-bound aggregates, contributing to the solubilization and refolding of denatured protein aggregates by DnaK. The protein is Chaperone protein ClpB 1 (clpB1) of Nostoc sp. (strain PCC 7120 / SAG 25.82 / UTEX 2576).